A 201-amino-acid chain; its full sequence is MAKRVTGPEIEKLIQLLAKVPGLGPRSARRAALHLVKKKEQLLGPLAEAMGEAHRKVKICSCCGNVDTIDPCTVCTDERRDQAVIIVVEDVADLWALERAGAMNAAYHVLGGTLSPLDGIGPEDLNIRGLIDRVAKGGVRELIIAVNATVEGQTTAHYITDQLEGMEVRITRLAHGVPVGGELDYLDEGTLAAALRARTVI.

The segment at 60–75 (CSCCGNVDTIDPCTVC) adopts a C4-type zinc-finger fold. In terms of domain architecture, Toprim spans 83–178 (AVIIVVEDVA…RITRLAHGVP (96 aa)).

Belongs to the RecR family.

Functionally, may play a role in DNA repair. It seems to be involved in an RecBC-independent recombinational process of DNA repair. It may act with RecF and RecO. This Rhizobium meliloti (strain 1021) (Ensifer meliloti) protein is Recombination protein RecR.